The following is an 89-amino-acid chain: Long neurotoxin homolog Pa ID (89 aa).

Positions 1–21 (MKTLLLTLVVVTIMCLDLGYT) are cleaved as a signal peptide. 5 disulfide bridges follow: Cys24-Cys42, Cys35-Cys63, Cys48-Cys52, Cys67-Cys78, and Cys79-Cys84.

This sequence belongs to the three-finger toxin family. Long-chain subfamily. Type II alpha-neurotoxin sub-subfamily. Expressed by the venom gland.

The protein resides in the secreted. In terms of biological role, binds with high affinity to muscular (alpha-1/CHRNA1) and neuronal (alpha-7/CHRNA7) nicotinic acetylcholine receptor (nAChR) and inhibits acetylcholine from binding to the receptor, thereby impairing neuromuscular and neuronal transmission. The sequence is that of Long neurotoxin homolog Pa ID from Pseudechis australis (Mulga snake).